We begin with the raw amino-acid sequence, 466 residues long: tRNA dimethylallyltransferase 2 (466 aa).

27–34 (GPTGSGKS) lines the ATP pocket. 29–34 (TGSGKS) contributes to the substrate binding site. An interaction with substrate tRNA region spans residues 52–55 (DAMQ). The tract at residues 433–466 (WEHHKQGRTHRKRTTRHKNSQTYKNREVQEAEVN) is disordered. A compositionally biased stretch (basic residues) spans 437–451 (KQGRTHRKRTTRHKN). Basic and acidic residues predominate over residues 456-466 (KNREVQEAEVN).

The protein belongs to the IPP transferase family. The cofactor is Mg(2+). As to expression, expressed ubiquitously, with highest expression in proliferating tissues.

It is found in the cytoplasm. It catalyses the reaction adenosine(37) in tRNA + dimethylallyl diphosphate = N(6)-dimethylallyladenosine(37) in tRNA + diphosphate. In terms of biological role, catalyzes the transfer of a dimethylallyl group onto the adenine at position 37 in tRNAs that read codons beginning with uridine, leading to the formation of N6-(dimethylallyl)adenosine (i(6)A). Involved in the cis-type cytokinin biosynthesis. This is tRNA dimethylallyltransferase 2 (IPT2) from Arabidopsis thaliana (Mouse-ear cress).